We begin with the raw amino-acid sequence, 1723 residues long: Lys-gingipain (1723 aa).

Residues 1-24 (MRKLLLLIAASLLGVGLYAQSAKI) form the signal peptide. The propeptide occupies 25–228 (KLDAPTTRTT…ETAYKQLFNR (204 aa)). 5 residues coordinate Ca(2+): Asp-313, Asp-337, Asp-339, Phe-341, and Glu-343. The active-site Proton donor is the His-444. Catalysis depends on Cys-477, which acts as the Nucleophile. 2 residues coordinate Ca(2+): Phe-482 and Glu-491. The tract at residues 964 to 985 (WDAPNGTPNPNPNPNPGTTTLS) is disordered. Residues Ser-987, Glu-989, Asp-1000, Asp-1002, Asp-1004, His-1006, Ser-1021, Gly-1023, Asn-1042, Asp-1145, Glu-1146, Asp-1430, Glu-1432, Asp-1444, Asp-1446, Asp-1448, Asn-1450, Ser-1480, Asn-1495, and Asp-1585 each coordinate Ca(2+).

It belongs to the peptidase C25 family. In terms of processing, proteolytically cleaved into a catalytic subunit and three adhesins. Arg-gingipain is involved in this post-translational processing.

It is found in the secreted. It carries out the reaction Endopeptidase with strict specificity for lysyl bonds.. Its activity is regulated as follows. Activated by the thiol-reducing agents cysteine, 2-mercaptoethanol and dithiothreitol. Inhibited by iodacetamide, iodoacetic acid, leupeptin, tosyl-L-lysine and tosyl-L-phenylalanine. Not inhibited by elastatinal, chymostatin, cystatins, alpha1-antichymotrypsin or the serine protease inhibitors phenylmethylsulfonyl fluoride and diisopropylfluorophosphate. Not inhibited by metal ion chelators. Inhibited by the heavy metal ions Fe(3+), Zn(2+), Cu(2+) and Mn(2+). In terms of biological role, cysteine proteinase with a strong preference for substrates with Lys in the P1 position. Hydrolyzes bovine hemoglobin, bovine serum albumin, casein, human placental type I collagen and human IgA and IgG. Disrupts the functions of polymorphonuclear leukocytes. May act as a virulence factor in the development of peridontal disease. Involved in the coaggregation of P.gingivalis with other oral bacteria. In Porphyromonas gingivalis (strain ATCC 33277 / DSM 20709 / CIP 103683 / JCM 12257 / NCTC 11834 / 2561), this protein is Lys-gingipain.